The primary structure comprises 248 residues: 14-3-3 protein zeta (248 aa).

Belongs to the 14-3-3 family. As to quaternary structure, homodimer.

The protein resides in the cytoplasm. Adapter protein implicated in the regulation of a large spectrum of both general and specialized signaling pathways. Binds to a large number of partners, usually by recognition of a phosphoserine or phosphothreonine motif. Binding generally results in the modulation of the activity of the binding partner. In Aedes aegypti (Yellowfever mosquito), this protein is 14-3-3 protein zeta (14-3-3zeta).